We begin with the raw amino-acid sequence, 299 residues long: Glycerol-3-phosphate dehydrogenase [NAD(P)+] (299 aa).

4 residues coordinate NADPH: Trp-11, Arg-30, His-31, and Lys-79. Lys-79, Gly-107, and Ser-109 together coordinate sn-glycerol 3-phosphate. Ala-111 is an NADPH binding site. Sn-glycerol 3-phosphate is bound by residues Lys-161, Asp-214, Ser-224, Arg-225, and Asn-226. Catalysis depends on Lys-161, which acts as the Proton acceptor. Residue Arg-225 participates in NADPH binding. Residues Val-249 and Glu-251 each coordinate NADPH.

The protein belongs to the NAD-dependent glycerol-3-phosphate dehydrogenase family.

The protein resides in the cytoplasm. The catalysed reaction is sn-glycerol 3-phosphate + NAD(+) = dihydroxyacetone phosphate + NADH + H(+). The enzyme catalyses sn-glycerol 3-phosphate + NADP(+) = dihydroxyacetone phosphate + NADPH + H(+). The protein operates within membrane lipid metabolism; glycerophospholipid metabolism. Catalyzes the reduction of the glycolytic intermediate dihydroxyacetone phosphate (DHAP) to sn-glycerol 3-phosphate (G3P), the key precursor for phospholipid synthesis. This chain is Glycerol-3-phosphate dehydrogenase [NAD(P)+], found in Nitratiruptor sp. (strain SB155-2).